The sequence spans 498 residues: Pentatricopeptide repeat-containing protein At3g61360 (498 aa).

PPR repeat units follow at residues 102–132 (TSDS…VRKD), 138–172 (SFKS…IFRK), 175–205 (GVDE…LHSR), 209–243 (DVKT…GFKP), 244–278 (NSVT…DFDI), 279–313 (TVQI…GLTP), 314–348 (DCGA…GIEP), 349–385 (DSVT…SLVP), and 386–420 (KTPT…GYCP).

It belongs to the PPR family. P subfamily.

The polypeptide is Pentatricopeptide repeat-containing protein At3g61360 (Arabidopsis thaliana (Mouse-ear cress)).